The following is a 360-amino-acid chain: Venom serine protease Bi-VSP (360 aa).

An N-terminal signal peptide occupies residues 1–26 (MTGSKMLFACLALIAFLHPLVHVASA). The propeptide occupies 27 to 113 (QECTTPNNKA…CGFSNVSHTR (87 aa)). Residues 28–79 (ECTTPNNKAGKCLGIRVCKPLLEMLQTQGHAAADFLRQSVCKYENNNPIVCC) form the Clip domain. 7 cysteine pairs are disulfide-bonded: Cys-29–Cys-78, Cys-39–Cys-68, Cys-45–Cys-79, Cys-104–Cys-230, Cys-147–Cys-163, Cys-278–Cys-296, and Cys-307–Cys-335. N-linked (GlcNAc...) asparagine glycosylation occurs at Asn-108. One can recognise a Peptidase S1 domain in the interval 114–360 (VVGGKPAVLG…LDDFILPAMQ (247 aa)). His-162 acts as the Charge relay system in catalysis. Asp-176, Asn-178, Arg-181, and Asp-184 together coordinate Ca(2+). Catalysis depends on Asp-210, which acts as the Charge relay system. The active-site Charge relay system is the Ser-311.

Belongs to the peptidase S1 family. CLIP subfamily. In terms of tissue distribution, expressed by the venom gland.

The protein localises to the secreted. In terms of biological role, multifunctional venom serine protease. In insects, it acts as an arthropod prophenoloxidase-activating factor, thereby triggering the phenoloxidase cascade. When injected into larvae, it induces a lethal melanization response in target insects by modulating the innate immune response. In mammals, it converts fibrinogen into fibrin, activates prothrombin, and also degrades fibrin. In mammal, it may act in a cooperative manner with the serine protease inhibitor Bi-KTI (AC G3LH89) to promote the spread of bee venom under anti-bleeding conditions. The protein is Venom serine protease Bi-VSP of Bombus ignitus (Bumblebee).